The following is a 406-amino-acid chain: Argininosuccinate synthase (406 aa).

8–16 (AYSGGLDTS) lines the ATP pocket. Tyrosine 86 provides a ligand contact to L-citrulline. Residue glycine 116 coordinates ATP. L-aspartate contacts are provided by threonine 118, asparagine 122, and aspartate 123. Asparagine 122 is a binding site for L-citrulline. L-citrulline contacts are provided by arginine 126, serine 174, serine 183, glutamate 259, and tyrosine 271.

This sequence belongs to the argininosuccinate synthase family. Type 1 subfamily. Homotetramer.

It is found in the cytoplasm. The enzyme catalyses L-citrulline + L-aspartate + ATP = 2-(N(omega)-L-arginino)succinate + AMP + diphosphate + H(+). The protein operates within amino-acid biosynthesis; L-arginine biosynthesis; L-arginine from L-ornithine and carbamoyl phosphate: step 2/3. The polypeptide is Argininosuccinate synthase (Dehalococcoides mccartyi (strain ATCC BAA-2266 / KCTC 15142 / 195) (Dehalococcoides ethenogenes (strain 195))).